The chain runs to 142 residues: Nucleoside diphosphate kinase (142 aa).

ATP is bound by residues Lys-9, Phe-57, Arg-85, Thr-91, Arg-102, and Asn-112. The tract at residues 87–106 (AMGATDPAKSEKGTVRGDLG) is disordered. His-115 acts as the Pros-phosphohistidine intermediate in catalysis.

The protein belongs to the NDK family. As to quaternary structure, homotetramer. Requires Mg(2+) as cofactor.

The protein localises to the cytoplasm. It catalyses the reaction a 2'-deoxyribonucleoside 5'-diphosphate + ATP = a 2'-deoxyribonucleoside 5'-triphosphate + ADP. The catalysed reaction is a ribonucleoside 5'-diphosphate + ATP = a ribonucleoside 5'-triphosphate + ADP. Functionally, major role in the synthesis of nucleoside triphosphates other than ATP. The ATP gamma phosphate is transferred to the NDP beta phosphate via a ping-pong mechanism, using a phosphorylated active-site intermediate. The sequence is that of Nucleoside diphosphate kinase from Dehalococcoides mccartyi (strain ATCC BAA-2266 / KCTC 15142 / 195) (Dehalococcoides ethenogenes (strain 195)).